Consider the following 500-residue polypeptide: Trans-cinnamate 4-monooxygenase (500 aa).

A helical membrane pass occupies residues 3-23 (ALLVEKVLLGLFVAAVLALVV). Residues 213-218 (RSRLSQ) and A302 contribute to the (E)-cinnamate site. C442 contacts heme.

Belongs to the cytochrome P450 family. It depends on heme as a cofactor. In terms of tissue distribution, expressed in roots and leaves.

The protein resides in the membrane. The catalysed reaction is (E)-cinnamate + reduced [NADPH--hemoprotein reductase] + O2 = (E)-4-coumarate + oxidized [NADPH--hemoprotein reductase] + H2O + H(+). Its pathway is phenylpropanoid metabolism; trans-4-coumarate biosynthesis; trans-4-coumarate from trans-cinnamate: step 1/1. Its function is as follows. Catalyzes the first oxidative step of the phenylpropanoid pathway in higher plants by transforming trans-cinnamate into p-coumarate. The compounds formed by this pathway are essential components for lignification, pollination, and defense against ultraviolet light, predators and pathogens. The chain is Trans-cinnamate 4-monooxygenase from Oryza sativa subsp. japonica (Rice).